A 698-amino-acid chain; its full sequence is Polyribonucleotide nucleotidyltransferase (698 aa).

The Mg(2+) site is built by Asp485 and Asp491. The region spanning 552–612 is the KH domain; that stretch reads PRVEMMTIPE…SDLKGAKSIV (61 aa). In terms of domain architecture, S1 motif spans 622 to 690; that stretch reads GMVYDGTVKK…KLGRLNLSYV (69 aa).

It belongs to the polyribonucleotide nucleotidyltransferase family. Mg(2+) serves as cofactor.

The protein resides in the cytoplasm. It carries out the reaction RNA(n+1) + phosphate = RNA(n) + a ribonucleoside 5'-diphosphate. Involved in mRNA degradation. Catalyzes the phosphorolysis of single-stranded polyribonucleotides processively in the 3'- to 5'-direction. The protein is Polyribonucleotide nucleotidyltransferase of Treponema denticola (strain ATCC 35405 / DSM 14222 / CIP 103919 / JCM 8153 / KCTC 15104).